An 86-amino-acid chain; its full sequence is Small ribosomal subunit protein bS16 (86 aa).

Belongs to the bacterial ribosomal protein bS16 family.

The polypeptide is Small ribosomal subunit protein bS16 (Mycoplasmoides gallisepticum (strain R(low / passage 15 / clone 2)) (Mycoplasma gallisepticum)).